Here is a 334-residue protein sequence, read N- to C-terminus: Glyceraldehyde-3-phosphate dehydrogenase (334 aa).

NAD(+)-binding positions include 12–13 and Gly-111; that span reads TI. Position 140 to 142 (140 to 142) interacts with D-glyceraldehyde 3-phosphate; it reads SCN. The active-site Nucleophile is Cys-141. NAD(+) is bound at residue Arg-167. D-glyceraldehyde 3-phosphate is bound at residue 192–193; the sequence is HG. NAD(+) is bound at residue Gln-298.

This sequence belongs to the glyceraldehyde-3-phosphate dehydrogenase family. Homotetramer.

It localises to the cytoplasm. It catalyses the reaction D-glyceraldehyde 3-phosphate + phosphate + NADP(+) = (2R)-3-phospho-glyceroyl phosphate + NADPH + H(+). The catalysed reaction is D-glyceraldehyde 3-phosphate + phosphate + NAD(+) = (2R)-3-phospho-glyceroyl phosphate + NADH + H(+). It functions in the pathway carbohydrate degradation; glycolysis; pyruvate from D-glyceraldehyde 3-phosphate: step 1/5. The polypeptide is Glyceraldehyde-3-phosphate dehydrogenase (Thermococcus onnurineus (strain NA1)).